A 446-amino-acid polypeptide reads, in one-letter code: Glutamine synthetase (446 aa).

The GS beta-grasp domain maps to 15–102; that stretch reads RDIRFVRLWF…MFCDITMPDG (88 aa). Positions 109–446 constitute a GS catalytic domain; it reads SRHVLRRQLA…PYELKNYLSL (338 aa). Positions 132 and 134 each coordinate Mg(2+). Residue Glu-184 coordinates ATP. Mg(2+) contacts are provided by Glu-189 and Glu-196. Gly-241 contributes to the L-glutamate binding site. Residue His-245 participates in Mg(2+) binding. ATP-binding positions include 247–249 and Ser-249; that span reads HMS. L-glutamate is bound by residues Arg-298, Glu-304, and Arg-316. ATP is bound by residues Arg-316 and Arg-321. Glu-336 provides a ligand contact to Mg(2+). Arg-338 serves as a coordination point for L-glutamate. An Isoglutamyl lysine isopeptide (Lys-Gln) (interchain with Q-Cter in protein Pup) cross-link involves residue Lys-363.

Belongs to the glutamine synthetase family. In terms of assembly, oligomer of 12 subunits arranged in the form of two hexagons. In its feedback-inhibited form, interacts with TnrA in order to block its DNA-binding activity. Requires Mg(2+) as cofactor.

It is found in the cytoplasm. The catalysed reaction is L-glutamate + NH4(+) + ATP = L-glutamine + ADP + phosphate + H(+). Its activity is regulated as follows. Inhibited by glutamine. Functionally, glutamine synthetase (GS) is an unusual multitasking protein that functions as an enzyme, a transcription coregulator, and a chaperone in ammonium assimilation and in the regulation of genes involved in nitrogen metabolism. It catalyzes the ATP-dependent biosynthesis of glutamine from glutamate and ammonia. Feedback-inhibited GlnA also interacts with and regulates the activity of the transcriptional regulator TnrA. During nitrogen limitation, TnrA is in its DNA-binding active state and turns on the transcription of genes required for nitrogen assimilation. Under conditions of nitrogen excess, feedback-inhibited GlnA forms a stable complex with TnrA, which inhibits its DNA-binding activity. In contrast, feedback-inhibited GlnA acts as a chaperone to stabilize the DNA-binding activity of GlnR, which represses the transcription of nitrogen assimilation genes. The polypeptide is Glutamine synthetase (Mycolicibacterium smegmatis (strain ATCC 700084 / mc(2)155) (Mycobacterium smegmatis)).